The following is a 618-amino-acid chain: 1-deoxy-D-xylulose-5-phosphate synthase (618 aa).

Residues His76 and 117-119 (GHS) each bind thiamine diphosphate. Residue Asp148 coordinates Mg(2+). Residues 149-150 (GA), Asn177, Tyr284, and Glu364 each bind thiamine diphosphate. Residue Asn177 participates in Mg(2+) binding.

This sequence belongs to the transketolase family. DXPS subfamily. In terms of assembly, homodimer. Mg(2+) is required as a cofactor. It depends on thiamine diphosphate as a cofactor.

It carries out the reaction D-glyceraldehyde 3-phosphate + pyruvate + H(+) = 1-deoxy-D-xylulose 5-phosphate + CO2. It functions in the pathway metabolic intermediate biosynthesis; 1-deoxy-D-xylulose 5-phosphate biosynthesis; 1-deoxy-D-xylulose 5-phosphate from D-glyceraldehyde 3-phosphate and pyruvate: step 1/1. Its function is as follows. Catalyzes the acyloin condensation reaction between C atoms 2 and 3 of pyruvate and glyceraldehyde 3-phosphate to yield 1-deoxy-D-xylulose-5-phosphate (DXP). This chain is 1-deoxy-D-xylulose-5-phosphate synthase, found in Francisella philomiragia subsp. philomiragia (strain ATCC 25017 / CCUG 19701 / FSC 153 / O#319-036).